Consider the following 152-residue polypeptide: Transcriptional regulator MraZ (152 aa).

2 SpoVT-AbrB domains span residues 5 to 52 (ATMV…TLPA) and 81 to 124 (ASEC…DEQT).

This sequence belongs to the MraZ family. In terms of assembly, forms oligomers.

It localises to the cytoplasm. Its subcellular location is the nucleoid. Functionally, negatively regulates its own expression and that of the subsequent genes in the proximal part of the division and cell wall (dcw) gene cluster. Acts by binding directly to DNA. May also regulate the expression of genes outside the dcw cluster. The sequence is that of Transcriptional regulator MraZ from Yersinia enterocolitica serotype O:8 / biotype 1B (strain NCTC 13174 / 8081).